The chain runs to 289 residues: 33 kDa chaperonin (289 aa).

2 cysteine pairs are disulfide-bonded: Cys230–Cys232 and Cys263–Cys266.

It belongs to the HSP33 family. In terms of processing, under oxidizing conditions two disulfide bonds are formed involving the reactive cysteines. Under reducing conditions zinc is bound to the reactive cysteines and the protein is inactive.

Its subcellular location is the cytoplasm. Redox regulated molecular chaperone. Protects both thermally unfolding and oxidatively damaged proteins from irreversible aggregation. Plays an important role in the bacterial defense system toward oxidative stress. In Shigella flexneri serotype 5b (strain 8401), this protein is 33 kDa chaperonin.